A 183-amino-acid polypeptide reads, in one-letter code: Ribosome rescue factor SmrB (183 aa).

A Smr domain is found at 98–173; that stretch reads LDLHGLTQKQ…GDAALLVLIE (76 aa).

The protein belongs to the SmrB family. In terms of assembly, associates with collided ribosomes, but not with correctly translating polysomes.

Acts as a ribosome collision sensor. Detects stalled/collided disomes (pairs of ribosomes where the leading ribosome is stalled and a second ribosome has collided with it) and endonucleolytically cleaves mRNA at the 5' boundary of the stalled ribosome. Stalled/collided disomes form a new interface (primarily via the 30S subunits) that binds SmrB. Cleaved mRNA becomes available for tmRNA ligation, leading to ribosomal subunit dissociation and rescue of stalled ribosomes. This chain is Ribosome rescue factor SmrB, found in Erwinia tasmaniensis (strain DSM 17950 / CFBP 7177 / CIP 109463 / NCPPB 4357 / Et1/99).